Consider the following 462-residue polypeptide: Tubby-like F-box protein 7 (462 aa).

One can recognise an F-box domain in the interval 54 to 109 (SKWAGLPPELLRDVMKRLEEDDSNWPSRKDVVACASVCTTWRDMCKDIVRNPEFCG). Disordered stretches follow at residues 317-338 (FSEF…DDVN) and 383-418 (QPSS…SSSN). The segment covering 383-417 (QPSSGAASEPSQAGQAAQQQTQPSQPSSSSSSSSS) has biased composition (low complexity).

Belongs to the TUB family. As to expression, ubiquitous.

The chain is Tubby-like F-box protein 7 (TULP7) from Oryza sativa subsp. japonica (Rice).